Consider the following 432-residue polypeptide: Glutamyl-tRNA reductase (432 aa).

Residues 49 to 52 (TCNR), Ser107, 112 to 114 (ETQ), and Gln118 each bind substrate. The active-site Nucleophile is the Cys50. Residue 186–191 (GAGEMG) participates in NADP(+) binding.

The protein belongs to the glutamyl-tRNA reductase family. In terms of assembly, homodimer.

It carries out the reaction (S)-4-amino-5-oxopentanoate + tRNA(Glu) + NADP(+) = L-glutamyl-tRNA(Glu) + NADPH + H(+). It participates in porphyrin-containing compound metabolism; protoporphyrin-IX biosynthesis; 5-aminolevulinate from L-glutamyl-tRNA(Glu): step 1/2. Its function is as follows. Catalyzes the NADPH-dependent reduction of glutamyl-tRNA(Glu) to glutamate 1-semialdehyde (GSA). In Campylobacter jejuni subsp. jejuni serotype O:6 (strain 81116 / NCTC 11828), this protein is Glutamyl-tRNA reductase.